The sequence spans 253 residues: Anamorsin homolog (253 aa).

Residues 4 to 129 are N-terminal SAM-like domain; sequence FKGLQKSLYI…ETGSSARLSF (126 aa). The segment at 130–161 is linker; it reads AKKNSSTLNVWKISGDDDELIDEEDLLDEVDK. The [2Fe-2S] cluster site is built by Cys172, Cys181, Cys184, and Cys186. Positions 172 to 186 are fe-S binding site A; sequence CSTTGKRKACKNCSC. Residues Cys214, Cys217, Cys225, and Cys228 each contribute to the [4Fe-4S] cluster site. Short sequence motifs (cx2C motif) lie at residues 214–217 and 225–228; these read CGNC and CSSC. The interval 214 to 228 is fe-S binding site B; the sequence is CGNCYLGDAFRCSSC.

Belongs to the anamorsin family. In terms of assembly, monomer. Requires [2Fe-2S] cluster as cofactor. It depends on [4Fe-4S] cluster as a cofactor.

The protein localises to the cytoplasm. It localises to the mitochondrion intermembrane space. In terms of biological role, component of the cytosolic iron-sulfur (Fe-S) protein assembly (CIA) machinery. Required for the maturation of extramitochondrial Fe-S proteins. Part of an electron transfer chain functioning in an early step of cytosolic Fe-S biogenesis, facilitating the de novo assembly of a [4Fe-4S] cluster on the cytosolic Fe-S scaffold complex. Electrons are transferred from NADPH via a FAD- and FMN-containing diflavin oxidoreductase. Together with the diflavin oxidoreductase, also required for the assembly of the diferric tyrosyl radical cofactor of ribonucleotide reductase (RNR), probably by providing electrons for reduction during radical cofactor maturation in the catalytic small subunit. The protein is Anamorsin homolog of Drosophila willistoni (Fruit fly).